The chain runs to 334 residues: Holliday junction branch migration complex subunit RuvB (334 aa).

Residues 1 to 182 form a large ATPase domain (RuvB-L) region; the sequence is MDERLVSSEL…FGVLSRLEYY (182 aa). ATP-binding positions include Leu21, Arg22, Gly63, Lys66, Thr67, Thr68, 129–131, Arg172, Tyr182, and Arg219; that span reads EDF. Thr67 provides a ligand contact to Mg(2+). A small ATPAse domain (RuvB-S) region spans residues 183-253; it reads TRDELSEIVI…VAVDALERLQ (71 aa). Residues 256-334 form a head domain (RuvB-H) region; the sequence is KLGLDHIDRK…HFKMEVPNHD (79 aa). Residues Arg311 and Arg316 each contribute to the DNA site.

Belongs to the RuvB family. Homohexamer. Forms an RuvA(8)-RuvB(12)-Holliday junction (HJ) complex. HJ DNA is sandwiched between 2 RuvA tetramers; dsDNA enters through RuvA and exits via RuvB. An RuvB hexamer assembles on each DNA strand where it exits the tetramer. Each RuvB hexamer is contacted by two RuvA subunits (via domain III) on 2 adjacent RuvB subunits; this complex drives branch migration. In the full resolvosome a probable DNA-RuvA(4)-RuvB(12)-RuvC(2) complex forms which resolves the HJ.

It is found in the cytoplasm. It carries out the reaction ATP + H2O = ADP + phosphate + H(+). Its function is as follows. The RuvA-RuvB-RuvC complex processes Holliday junction (HJ) DNA during genetic recombination and DNA repair, while the RuvA-RuvB complex plays an important role in the rescue of blocked DNA replication forks via replication fork reversal (RFR). RuvA specifically binds to HJ cruciform DNA, conferring on it an open structure. The RuvB hexamer acts as an ATP-dependent pump, pulling dsDNA into and through the RuvAB complex. RuvB forms 2 homohexamers on either side of HJ DNA bound by 1 or 2 RuvA tetramers; 4 subunits per hexamer contact DNA at a time. Coordinated motions by a converter formed by DNA-disengaged RuvB subunits stimulates ATP hydrolysis and nucleotide exchange. Immobilization of the converter enables RuvB to convert the ATP-contained energy into a lever motion, pulling 2 nucleotides of DNA out of the RuvA tetramer per ATP hydrolyzed, thus driving DNA branch migration. The RuvB motors rotate together with the DNA substrate, which together with the progressing nucleotide cycle form the mechanistic basis for DNA recombination by continuous HJ branch migration. Branch migration allows RuvC to scan DNA until it finds its consensus sequence, where it cleaves and resolves cruciform DNA. The protein is Holliday junction branch migration complex subunit RuvB of Bacillus licheniformis (strain ATCC 14580 / DSM 13 / JCM 2505 / CCUG 7422 / NBRC 12200 / NCIMB 9375 / NCTC 10341 / NRRL NRS-1264 / Gibson 46).